The following is a 216-amino-acid chain: Uracil phosphoribosyltransferase (216 aa).

5-phospho-alpha-D-ribose 1-diphosphate-binding positions include Arg85, Arg110, and 135–143 (DPMVATGYS). Residues Ile200 and 205–207 (GDA) each bind uracil. 5-phospho-alpha-D-ribose 1-diphosphate is bound at residue Asp206.

Belongs to the UPRTase family. Requires Mg(2+) as cofactor.

It carries out the reaction UMP + diphosphate = 5-phospho-alpha-D-ribose 1-diphosphate + uracil. It participates in pyrimidine metabolism; UMP biosynthesis via salvage pathway; UMP from uracil: step 1/1. Allosterically activated by GTP. Functionally, catalyzes the conversion of uracil and 5-phospho-alpha-D-ribose 1-diphosphate (PRPP) to UMP and diphosphate. The chain is Uracil phosphoribosyltransferase from Paraburkholderia xenovorans (strain LB400).